Reading from the N-terminus, the 280-residue chain is DegV domain-containing protein Mb2440c (280 aa).

The DegV domain maps to Val-3–Val-274. Ser-89 serves as a coordination point for hexadecanoate.

Its function is as follows. May bind long-chain fatty acids, such as palmitate, and may play a role in lipid transport or fatty acid metabolism. The sequence is that of DegV domain-containing protein Mb2440c from Mycobacterium bovis (strain ATCC BAA-935 / AF2122/97).